A 371-amino-acid polypeptide reads, in one-letter code: Transposase for insertion sequence element IS421 (371 aa).

The protein belongs to the transposase 11 family.

Functionally, involved in the transposition of the insertion sequence IS421. The polypeptide is Transposase for insertion sequence element IS421 (Escherichia coli).